Reading from the N-terminus, the 243-residue chain is MAELLLGVNIDHIATLRNARGTAYPDPVQAAFIAEQAGADGITVHLREDRRHITDRDVRILRQTLDTRMNLEMAVTEEMLAIAVETKPHFCCLVPEKRQEVTTEGGLDVAGQREKMRDACKRLTDAGIQISLFIDADEEQIKAAAEVGAPFIEIHTGCYADAKTDAEQAQELVRIAKAATFAASLGLKVNAGHGLTYHNVKAIAAIPEMHELNIGHAIIGRAVMTGLKDAVAEMKRLMLEARG.

Position 9 (N9) interacts with 3-amino-2-oxopropyl phosphate. 11–12 contacts 1-deoxy-D-xylulose 5-phosphate; sequence DH. A 3-amino-2-oxopropyl phosphate-binding site is contributed by R20. H45 functions as the Proton acceptor in the catalytic mechanism. Positions 47 and 52 each coordinate 1-deoxy-D-xylulose 5-phosphate. E72 functions as the Proton acceptor in the catalytic mechanism. T102 provides a ligand contact to 1-deoxy-D-xylulose 5-phosphate. The Proton donor role is filled by H193. Residues G194 and 215–216 each bind 3-amino-2-oxopropyl phosphate; that span reads GH.

The protein belongs to the PNP synthase family. As to quaternary structure, homooctamer; tetramer of dimers.

The protein localises to the cytoplasm. The catalysed reaction is 3-amino-2-oxopropyl phosphate + 1-deoxy-D-xylulose 5-phosphate = pyridoxine 5'-phosphate + phosphate + 2 H2O + H(+). The protein operates within cofactor biosynthesis; pyridoxine 5'-phosphate biosynthesis; pyridoxine 5'-phosphate from D-erythrose 4-phosphate: step 5/5. Functionally, catalyzes the complicated ring closure reaction between the two acyclic compounds 1-deoxy-D-xylulose-5-phosphate (DXP) and 3-amino-2-oxopropyl phosphate (1-amino-acetone-3-phosphate or AAP) to form pyridoxine 5'-phosphate (PNP) and inorganic phosphate. In Shigella sonnei (strain Ss046), this protein is Pyridoxine 5'-phosphate synthase.